The primary structure comprises 164 residues: Putative ankyrin repeat protein RBE_0585 (164 aa).

2 ANK repeats span residues 42 to 107 (NQDT…VAIL) and 126 to 149 (DKDT…MLDY).

This chain is Putative ankyrin repeat protein RBE_0585, found in Rickettsia bellii (strain RML369-C).